The primary structure comprises 358 residues: MDLLFAKIICIGIFLVVTTFGCFIPHLMGLYKEKENEEKNKRVKNILSNLNCFGSGFIFSIIMFHLLPETIHIISDHGNIRIFNTSDSQMKILYIFFFVFIGFCMQLGLEYVLPVDTNICCVSNLDSKKKLEDTLSQHITKNASTTVNIEMQNIDNIDHIHEHSCEGVHTHDEKSIGKFLEILTLQSFFLTISLAIHSCIEGMIIGTSTDVNYVFISSFCILLHKWIAGVTVSLSLNSNNMNKTLKAILLLTFVFASPLGIVLGHMAKSAGQKVTCLINAVSIGTLLFIGCEILLNEIKQNISRKVRLCKWLSFCFSCLIAFALISFTTSMAPHTHGDIDTHVHVHHHDHDHDHGHNH.

The Extracellular segment spans residues 1-7 (MDLLFAK). Residues 8–28 (IICIGIFLVVTTFGCFIPHLM) traverse the membrane as a helical segment. The Cytoplasmic segment spans residues 29–53 (GLYKEKENEEKNKRVKNILSNLNCF). Residues 54 to 74 (GSGFIFSIIMFHLLPETIHII) traverse the membrane as a helical segment. Residues 75 to 91 (SDHGNIRIFNTSDSQMK) are Extracellular-facing. A helical membrane pass occupies residues 92–112 (ILYIFFFVFIGFCMQLGLEYV). Residues 113 to 186 (LPVDTNICCV…GKFLEILTLQ (74 aa)) are Cytoplasmic-facing. The chain crosses the membrane as a helical span at residues 187-207 (SFFLTISLAIHSCIEGMIIGT). The Extracellular portion of the chain corresponds to 208-213 (STDVNY). Residues 214 to 234 (VFISSFCILLHKWIAGVTVSL) traverse the membrane as a helical segment. Residues 235–246 (SLNSNNMNKTLK) are Cytoplasmic-facing. The helical transmembrane segment at 247-267 (AILLLTFVFASPLGIVLGHMA) threads the bilayer. The Extracellular segment spans residues 268-273 (KSAGQK). A helical membrane pass occupies residues 274-294 (VTCLINAVSIGTLLFIGCEIL). Over 295–310 (LNEIKQNISRKVRLCK) the chain is Cytoplasmic. Residues 311–331 (WLSFCFSCLIAFALISFTTSM) traverse the membrane as a helical segment. The Extracellular segment spans residues 332–358 (APHTHGDIDTHVHVHHHDHDHDHGHNH).

The protein belongs to the ZIP transporter (TC 2.A.5) family. Homodimer.

It localises to the plastid. It is found in the apicoplast. The protein resides in the cell membrane. It catalyses the reaction Zn(2+)(in) = Zn(2+)(out). It carries out the reaction Fe(2+)(in) = Fe(2+)(out). Functionally, transporter for the divalent zinc cation. Mediates the influx of zinc into cells from extracellular space. Can transport divalent iron ions. Does not transport manganese and cadmium cations. This is Zinc transporter ZIP1 from Plasmodium falciparum (isolate 3D7).